A 326-amino-acid chain; its full sequence is Transmembrane protein 171 (326 aa).

4 helical membrane-spanning segments follow: residues 22 to 42 (IFFL…LSIF), 57 to 77 (MMLK…VILA), 114 to 134 (LIFG…GIWV), and 161 to 181 (FLSL…FFVV). Residues 229 to 326 (FPESSASAAA…LSPSSEPSPP (98 aa)) are disordered. Positions 230 to 240 (PESSASAAARS) are enriched in low complexity. Over residues 257 to 266 (SIFQSGSPTP) the composition is skewed to polar residues. 2 stretches are compositionally biased toward low complexity: residues 288–302 (SSSE…LSEL) and 312–326 (ATTT…PSPP).

The protein resides in the membrane. This is Transmembrane protein 171 (TMEM171) from Bos taurus (Bovine).